Consider the following 376-residue polypeptide: Ribonucleoside-diphosphate reductase 1 subunit beta (376 aa).

The Fe cation site is built by Asp85, Glu116, and His119. Tyr123 is a catalytic residue. Residues Glu205, Glu239, and His242 each coordinate Fe cation.

The protein belongs to the ribonucleoside diphosphate reductase small chain family. In terms of assembly, tetramer of two alpha (R1) and two beta (R2) subunits. The B1 protein is a dimer of alpha subunits. A radical transfer pathway occurs between Tyr-123 of R2 and R1. The cofactor is Fe cation.

The catalysed reaction is a 2'-deoxyribonucleoside 5'-diphosphate + [thioredoxin]-disulfide + H2O = a ribonucleoside 5'-diphosphate + [thioredoxin]-dithiol. Functionally, provides the precursors necessary for DNA synthesis. Catalyzes the biosynthesis of deoxyribonucleotides from the corresponding ribonucleotides. R2 contains the tyrosyl radical required for catalysis. This Salmonella typhimurium (strain LT2 / SGSC1412 / ATCC 700720) protein is Ribonucleoside-diphosphate reductase 1 subunit beta (nrdB).